Reading from the N-terminus, the 344-residue chain is L-lactate dehydrogenase B (344 aa).

NAD(+) contacts are provided by residues 62-67 and arginine 109; that span reads DALPDK. Positions 116, 148, and 179 each coordinate substrate. Asparagine 148 serves as a coordination point for NAD(+). Histidine 203 (proton acceptor) is an active-site residue. Threonine 258 is a substrate binding site.

It belongs to the LDH/MDH superfamily. LDH family. In terms of assembly, tetramer that arise from random association of LDH-A and LDH-B.

The catalysed reaction is (S)-lactate + NAD(+) = pyruvate + NADH + H(+). It functions in the pathway fermentation; pyruvate fermentation to lactate; (S)-lactate from pyruvate: step 1/1. The protein is L-lactate dehydrogenase B of Hordeum vulgare (Barley).